A 142-amino-acid chain; its full sequence is Large ribosomal subunit protein uL29 (142 aa).

The protein belongs to the universal ribosomal protein uL29 family.

This is Large ribosomal subunit protein uL29 (RPL35) from Theileria annulata.